The chain runs to 327 residues: uncharacterized protein (327 aa).

Residues 13–33 form a helical membrane-spanning segment; it reads IICIISIIVLLLIIISLYPHK.

It localises to the membrane. This is an uncharacterized protein from Caenorhabditis elegans.